Reading from the N-terminus, the 427-residue chain is G2/mitotic-specific cyclin-B1 (427 aa).

A disordered region spans residues 33–126; sequence ATSKPGLRPR…DTPSPSPMET (94 aa). Lys-73 is subject to N6-acetyllysine. Basic and acidic residues predominate over residues 100–110; the sequence is EPEHVKEDKLS. Ser-120 is subject to Phosphoserine; by CDK1. Ser-122 is modified (phosphoserine). Ser-127 is subject to Phosphoserine; by PLK1. Phosphoserine is present on Ser-141. Interaction with CDK2 regions lie at residues 163–171 and 252–255; these read EYVKDIYAY and YEEM. Thr-315 carries the post-translational modification Phosphothreonine.

Belongs to the cyclin family. Cyclin AB subfamily. As to quaternary structure, interacts with the CDC2 protein kinase to form a serine/threonine kinase holoenzyme complex also known as maturation promoting factor (MPF). The cyclin subunit imparts substrate specificity to the complex. Binds HEI10. Interacts with catalytically active RALBP1 and CDC2 during mitosis to form an endocytotic complex during interphase. Interacts with CCNF; interaction is required for nuclear localization. Interacts with CDK5RAP3. Interacts with RFPL4A and UBE2A. Interacts with INCA1. In terms of processing, ubiquitinated by the SCF(NIPA) complex during interphase, leading to its destruction. Deubiquitinated by USP22 during G2/M phase. Post-translationally, phosphorylated by PLK1 at Ser-127 on centrosomes during prophase: phosphorylation by PLK1 does not cause nuclear import. Phosphorylation at Ser-141 was also reported to be mediated by PLK1 but Ser-127 seems to be the primary phosphorylation site.

The protein localises to the cytoplasm. It is found in the nucleus. Its subcellular location is the cytoskeleton. The protein resides in the microtubule organizing center. It localises to the centrosome. In terms of biological role, essential for the control of the cell cycle at the G2/M (mitosis) transition. This chain is G2/mitotic-specific cyclin-B1 (CCNB1), found in Bos taurus (Bovine).